A 117-amino-acid polypeptide reads, in one-letter code: Immunoglobulin lambda variable 7-43 (117 aa).

An N-terminal signal peptide occupies residues 1–19 (MAWTPLFLFLLTCCPGSNS). The interval 20–44 (QTVVTQEPSLTVSPGGTVTLTCASS) is framework-1. The region spanning 20 to 117 (QTVVTQEPSL…YCLLYYGGAQ (98 aa)) is the Ig-like domain. Cys-41 and Cys-109 form a disulfide bridge. Residues 45–53 (TGAVTSGYY) form a complementarity-determining-1 region. The interval 54-70 (PNWFQQKPGQAPRALIY) is framework-2. Positions 71-73 (STS) are complementarity-determining-2. The interval 74 to 109 (NKHSWTPARFSGSLLGGKAALTLSGVQPEDEAEYYC) is framework-3. Residues 110–117 (LLYYGGAQ) form a complementarity-determining-3 region.

Immunoglobulins are composed of two identical heavy chains and two identical light chains; disulfide-linked.

Its subcellular location is the secreted. It localises to the cell membrane. In terms of biological role, v region of the variable domain of immunoglobulin light chains that participates in the antigen recognition. Immunoglobulins, also known as antibodies, are membrane-bound or secreted glycoproteins produced by B lymphocytes. In the recognition phase of humoral immunity, the membrane-bound immunoglobulins serve as receptors which, upon binding of a specific antigen, trigger the clonal expansion and differentiation of B lymphocytes into immunoglobulins-secreting plasma cells. Secreted immunoglobulins mediate the effector phase of humoral immunity, which results in the elimination of bound antigens. The antigen binding site is formed by the variable domain of one heavy chain, together with that of its associated light chain. Thus, each immunoglobulin has two antigen binding sites with remarkable affinity for a particular antigen. The variable domains are assembled by a process called V-(D)-J rearrangement and can then be subjected to somatic hypermutations which, after exposure to antigen and selection, allow affinity maturation for a particular antigen. This is Immunoglobulin lambda variable 7-43 from Homo sapiens (Human).